We begin with the raw amino-acid sequence, 398 residues long: Lipoyl synthase, mitochondrial (398 aa).

A mitochondrion-targeting transit peptide spans Met1–Leu32. Cys117, Cys122, Cys128, Cys147, Cys151, Cys154, and Ser362 together coordinate [4Fe-4S] cluster. Residues Lys132–Leu351 enclose the Radical SAM core domain.

It belongs to the radical SAM superfamily. Lipoyl synthase family. Requires [4Fe-4S] cluster as cofactor.

The protein localises to the mitochondrion. The catalysed reaction is [[Fe-S] cluster scaffold protein carrying a second [4Fe-4S](2+) cluster] + N(6)-octanoyl-L-lysyl-[protein] + 2 oxidized [2Fe-2S]-[ferredoxin] + 2 S-adenosyl-L-methionine + 4 H(+) = [[Fe-S] cluster scaffold protein] + N(6)-[(R)-dihydrolipoyl]-L-lysyl-[protein] + 4 Fe(3+) + 2 hydrogen sulfide + 2 5'-deoxyadenosine + 2 L-methionine + 2 reduced [2Fe-2S]-[ferredoxin]. The protein operates within protein modification; protein lipoylation via endogenous pathway; protein N(6)-(lipoyl)lysine from octanoyl-[acyl-carrier-protein]: step 2/2. Functionally, catalyzes the radical-mediated insertion of two sulfur atoms into the C-6 and C-8 positions of the octanoyl moiety bound to the lipoyl domains of lipoate-dependent enzymes, thereby converting the octanoylated domains into lipoylated derivatives. In Scheffersomyces stipitis (strain ATCC 58785 / CBS 6054 / NBRC 10063 / NRRL Y-11545) (Yeast), this protein is Lipoyl synthase, mitochondrial.